Consider the following 197-residue polypeptide: Recombination protein RecR (197 aa).

The C4-type zinc finger occupies Cys55 to Cys70. A Toprim domain is found at Gln78–Pro173.

This sequence belongs to the RecR family.

Its function is as follows. May play a role in DNA repair. It seems to be involved in an RecBC-independent recombinational process of DNA repair. It may act with RecF and RecO. The polypeptide is Recombination protein RecR (Xanthomonas euvesicatoria pv. vesicatoria (strain 85-10) (Xanthomonas campestris pv. vesicatoria)).